Consider the following 472-residue polypeptide: Argininosuccinate lyase (472 aa).

The protein belongs to the lyase 1 family. Argininosuccinate lyase subfamily.

It localises to the cytoplasm. It carries out the reaction 2-(N(omega)-L-arginino)succinate = fumarate + L-arginine. It functions in the pathway amino-acid biosynthesis; L-arginine biosynthesis; L-arginine from L-ornithine and carbamoyl phosphate: step 3/3. The protein is Argininosuccinate lyase of Cupriavidus necator (strain ATCC 17699 / DSM 428 / KCTC 22496 / NCIMB 10442 / H16 / Stanier 337) (Ralstonia eutropha).